A 79-amino-acid chain; its full sequence is Acyl carrier protein (79 aa).

In terms of domain architecture, Carrier spans 2–77 (ESIEQRVKKI…QAIDYINSHG (76 aa)). S37 carries the post-translational modification O-(pantetheine 4'-phosphoryl)serine.

Belongs to the acyl carrier protein (ACP) family. In terms of processing, 4'-phosphopantetheine is transferred from CoA to a specific serine of apo-ACP by AcpS. This modification is essential for activity because fatty acids are bound in thioester linkage to the sulfhydryl of the prosthetic group.

It localises to the cytoplasm. It participates in lipid metabolism; fatty acid biosynthesis. Carrier of the growing fatty acid chain in fatty acid biosynthesis. This is Acyl carrier protein from Bordetella avium (strain 197N).